Consider the following 470-residue polypeptide: 3-isopropylmalate dehydratase large subunit (470 aa).

[4Fe-4S] cluster-binding residues include Cys-349, Cys-409, and Cys-412.

This sequence belongs to the aconitase/IPM isomerase family. LeuC type 1 subfamily. Heterodimer of LeuC and LeuD. Requires [4Fe-4S] cluster as cofactor.

The enzyme catalyses (2R,3S)-3-isopropylmalate = (2S)-2-isopropylmalate. It functions in the pathway amino-acid biosynthesis; L-leucine biosynthesis; L-leucine from 3-methyl-2-oxobutanoate: step 2/4. In terms of biological role, catalyzes the isomerization between 2-isopropylmalate and 3-isopropylmalate, via the formation of 2-isopropylmaleate. The sequence is that of 3-isopropylmalate dehydratase large subunit from Afipia carboxidovorans (strain ATCC 49405 / DSM 1227 / KCTC 32145 / OM5) (Oligotropha carboxidovorans).